The chain runs to 343 residues: Glyceraldehyde-3-phosphate dehydrogenase (343 aa).

NAD(+) is bound by residues Thr-11–Ile-12 and Gly-110. Ser-139–Asn-141 serves as a coordination point for D-glyceraldehyde 3-phosphate. The Nucleophile role is filled by Cys-140. Arg-168 is a binding site for NAD(+). His-194–Gly-195 provides a ligand contact to D-glyceraldehyde 3-phosphate. Gln-301 lines the NAD(+) pocket.

This sequence belongs to the glyceraldehyde-3-phosphate dehydrogenase family. In terms of assembly, homotetramer.

The protein resides in the cytoplasm. It catalyses the reaction D-glyceraldehyde 3-phosphate + phosphate + NADP(+) = (2R)-3-phospho-glyceroyl phosphate + NADPH + H(+). It carries out the reaction D-glyceraldehyde 3-phosphate + phosphate + NAD(+) = (2R)-3-phospho-glyceroyl phosphate + NADH + H(+). Its pathway is carbohydrate degradation; glycolysis; pyruvate from D-glyceraldehyde 3-phosphate: step 1/5. This is Glyceraldehyde-3-phosphate dehydrogenase from Methanoregula boonei (strain DSM 21154 / JCM 14090 / 6A8).